We begin with the raw amino-acid sequence, 117 residues long: Ig heavy chain V region MOPC 47A (117 aa).

In terms of domain architecture, Ig-like spans 1–113 (EVKLVESGGG…FAYWGZGTLV (113 aa)).

The sequence is that of Ig heavy chain V region MOPC 47A from Mus musculus (Mouse).